The sequence spans 266 residues: GTP-binding protein Rhes (266 aa).

26–33 (GASRVGKS) provides a ligand contact to GTP. An Effector region motif is present at residues 48–56 (YTPTIEDFH). GTP contacts are provided by residues 73–77 (DTSGN) and 140–143 (NKND). The segment at 189–235 (MAKLPHEMSPALHRKISVQYGDAFHPRPFCMRRVKEMDAYGMVSPFA) is interaction with GNB1, GNB2 and GNB3. C263 carries the post-translational modification Cysteine methyl ester. C263 carries S-farnesyl cysteine lipidation. Residues 264–266 (TIQ) constitute a propeptide, removed in mature form.

It belongs to the small GTPase superfamily. RasD family. In terms of assembly, monomer (Potential). Interacts with PIK3CA and UBE2I. Interacts with GNB1, GNB2 and GNB3. Interacts with HTT; interacts with mutant HTT (mHTT) with a much higher affinity than wild type HTT. Post-translationally, farnesylated. Farnesylation is required for membrane targeting. Pancreatic endocrine cells (islets of Langerhans).

The protein resides in the cell membrane. GTPase signaling protein that binds to and hydrolyzes GTP. Regulates signaling pathways involving G-proteins-coupled receptor and heterotrimeric proteins such as GNB1, GNB2 and GNB3. May be involved in selected striatal competencies, mainly locomotor activity and motor coordination. This chain is GTP-binding protein Rhes (RASD2), found in Homo sapiens (Human).